Reading from the N-terminus, the 219-residue chain is Protein DCL homolog, chloroplastic (219 aa).

Residues 1 to 48 constitute a chloroplast transit peptide; it reads MSLASIPSSSPVASPYFRCRTYIFSFSSSPLCLYFPRGDSTSLRPRVR. Positions 70-96 are disordered; that stretch reads LRRPRIASEESSEEEEEEEEENSEGDE. Acidic residues predominate over residues 79 to 96; that stretch reads ESSEEEEEEEEENSEGDE.

Expressed in leaves, stems, flowers and siliques.

The protein localises to the plastid. The protein resides in the chloroplast. Functionally, required for normal plastid function and plant development. Required for correct plastid ribosome assembly. Required for processing and maturation of 4.5S rRNA. In Arabidopsis thaliana (Mouse-ear cress), this protein is Protein DCL homolog, chloroplastic.